We begin with the raw amino-acid sequence, 625 residues long: ATP-binding cassette sub-family F member 2 (625 aa).

Residues 1–54 are disordered; sequence MPSDLAKKKAAKKKEAAKARQRPRKGHEENGDAITEPQVAEERNEEANGRETTE. Positions 40 to 54 are enriched in basic and acidic residues; sequence AEERNEEANGRETTE. 2 ABC transporter domains span residues 88 to 327 and 398 to 615; these read AHII…ENQM and IMVQ…VGEE. ATP is bound at residue 120–127; that stretch reads GLNGIGKS. A Phosphothreonine modification is found at threonine 220. Lysine 306 is subject to N6-acetyllysine. 432–439 is a binding site for ATP; it reads GPNGAGKS. Serine 514 carries the phosphoserine modification.

This sequence belongs to the ABC transporter superfamily. ABCF family. EF3 subfamily.

In Bos taurus (Bovine), this protein is ATP-binding cassette sub-family F member 2 (ABCF2).